The following is a 55-amino-acid chain: ATP synthase F(0) complex subunit 8 (55 aa).

Residues 4-24 form a helical membrane-spanning segment; the sequence is LNPSPWLLILLFSWLIFLTML. Positions 36–55 are disordered; the sequence is MPSTQNMCKQEPEPWTWPWA.

The protein belongs to the ATPase protein 8 family. As to quaternary structure, component of the ATP synthase complex composed at least of ATP5F1A/subunit alpha, ATP5F1B/subunit beta, ATP5MC1/subunit c (homooctomer), MT-ATP6/subunit a, MT-ATP8/subunit 8, ATP5ME/subunit e, ATP5MF/subunit f, ATP5MG/subunit g, ATP5MK/subunit k, ATP5MJ/subunit j, ATP5F1C/subunit gamma, ATP5F1D/subunit delta, ATP5F1E/subunit epsilon, ATP5PF/subunit F6, ATP5PB/subunit b, ATP5PD/subunit d, ATP5PO/subunit OSCP. ATP synthase complex consists of a soluble F(1) head domain (subunits alpha(3) and beta(3)) - the catalytic core - and a membrane F(0) domain - the membrane proton channel (subunits c, a, 8, e, f, g, k and j). These two domains are linked by a central stalk (subunits gamma, delta, and epsilon) rotating inside the F1 region and a stationary peripheral stalk (subunits F6, b, d, and OSCP).

It is found in the mitochondrion membrane. In terms of biological role, subunit 8, of the mitochondrial membrane ATP synthase complex (F(1)F(0) ATP synthase or Complex V) that produces ATP from ADP in the presence of a proton gradient across the membrane which is generated by electron transport complexes of the respiratory chain. ATP synthase complex consist of a soluble F(1) head domain - the catalytic core - and a membrane F(1) domain - the membrane proton channel. These two domains are linked by a central stalk rotating inside the F(1) region and a stationary peripheral stalk. During catalysis, ATP synthesis in the catalytic domain of F(1) is coupled via a rotary mechanism of the central stalk subunits to proton translocation. In vivo, can only synthesize ATP although its ATP hydrolase activity can be activated artificially in vitro. Part of the complex F(0) domain. This chain is ATP synthase F(0) complex subunit 8, found in Latimeria chalumnae (Coelacanth).